The primary structure comprises 806 residues: Volume-regulated anion channel subunit LRRC8E (806 aa).

The Cytoplasmic portion of the chain corresponds to 1 to 22; the sequence is MIPVAEFKQFTEQQPAFKVLKP. Residues 23 to 43 form a helical membrane-spanning segment; the sequence is WWDVLAEYITYAMLMIGVFGC. The Extracellular segment spans residues 44–130; the sequence is TLQVTQDKII…YETALHWYAK (87 aa). Cysteine 54 and cysteine 311 are oxidised to a cystine. N-linked (GlcNAc...) asparagine glycosylation is found at asparagine 57 and asparagine 80. Residues 72 to 81 are compositionally biased toward polar residues; it reads YDQQSPPSND. The tract at residues 72–103 is disordered; sequence YDQQSPPSNDSDLETTIPPPTATSSPPREMSG. Residues 131-151 form a helical membrane-spanning segment; that stretch reads YFPYLVVIHTLIFIICGNFWF. At 152 to 275 the chain is on the cytoplasmic side; that stretch reads KFPGTSSKIE…MRQTVLKVCK (124 aa). The segment at 182–213 is disordered; the sequence is EVSGESSQEKPSQERSIDRELSKPNFEEGSPA. The segment covering 188-207 has biased composition (basic and acidic residues); that stretch reads SQEKPSQERSIDRELSKPNF. A helical transmembrane segment spans residues 276 to 296; sequence FVLITIYNAVLVGKIHFIVPC. Residues 297–323 are Extracellular-facing; it reads SVHTEDMTGYNSFCCNHTKAHLFSKLA. N-linked (GlcNAc...) asparagine glycosylation occurs at asparagine 312. The chain crosses the membrane as a helical span at residues 324-344; sequence ITYLCFLGVYGLTCLYTLYWL. At 345 to 806 the chain is on the cytoplasmic side; sequence FRRPLKEYSF…VEVRDKLKED (462 aa). LRR repeat units lie at residues 544 to 566, 569 to 589, 593 to 614, 616 to 637, 641 to 662, 664 to 685, 687 to 708, 710 to 731, 733 to 754, and 756 to 777; these read LKSL…VADV, HLQK…NALK, LVKE…VFSL, NLQV…ISLQ, KLSV…IRKL, GLEE…LFLC, KLRH…IGVL, LLQY…LFFC, KLKT…VGSL, and CLVK…LGNC.

This sequence belongs to the LRRC8 family. Heterohexamer; oligomerizes with other LRRC8 proteins (lrrc8a, lrrc8c, lrrc8d and/or lrrc8b) to form a heterohexamer. Detected in a channel complex that contains lrrc8a, lrrc8c and lrrc8e. In vivo, the subunit composition may depend primarily on expression levels, and heterooligomeric channels containing various proportions of the different LRRC8 proteins may coexist.

It localises to the cell membrane. The protein resides in the endoplasmic reticulum membrane. It is found in the lysosome membrane. It catalyses the reaction chloride(in) = chloride(out). It carries out the reaction iodide(out) = iodide(in). The enzyme catalyses taurine(out) = taurine(in). The catalysed reaction is 2',3'-cGAMP(out) = 2',3'-cGAMP(in). Its function is as follows. Non-essential component of the volume-regulated anion channel (VRAC, also named VSOAC channel), an anion channel required to maintain a constant cell volume in response to extracellular or intracellular osmotic changes. The VRAC channel conducts iodide better than chloride and can also conduct organic osmolytes like taurine. Mediates efflux of amino acids, such as aspartate, in response to osmotic stress. The VRAC channel also mediates transport of immunoreactive cyclic dinucleotide GMP-AMP (2'-3'-cGAMP), an immune messenger produced in response to DNA virus in the cytosol. Channel activity requires lrrc8a plus at least one other family member (lrrc8b, lrrc8c, lrrc8d or lrrc8e); channel characteristics depend on the precise subunit composition. Also plays a role in lysosome homeostasis by forming functional lysosomal VRAC channels in response to low cytoplasmic ionic strength condition: lysosomal VRAC channels are necessary for the formation of large lysosome-derived vacuoles, which store and then expel excess water to maintain cytosolic water homeostasis. The sequence is that of Volume-regulated anion channel subunit LRRC8E from Xenopus tropicalis (Western clawed frog).